The following is a 334-amino-acid chain: L-lactate dehydrogenase B chain (334 aa).

At Ala-2 the chain carries N-acetylalanine. Lys-7 is subject to N6-acetyllysine. NAD(+)-binding positions include 30–58 (GQVGMACAISILGKSLTDELALVDVLEDK) and Arg-100. Position 44 is a phosphoserine (Ser-44). Lys-58 bears the N6-acetyllysine mark. Residue Arg-107 participates in substrate binding. Position 119 is an N6-acetyllysine (Lys-119). Residue Asn-139 coordinates NAD(+). Asn-139 and Arg-170 together coordinate substrate. His-194 acts as the Proton acceptor in catalysis. At Tyr-240 the chain carries Phosphotyrosine. Thr-249 contacts substrate. Lys-329 carries the post-translational modification N6-acetyllysine.

It belongs to the LDH/MDH superfamily. LDH family. In terms of assembly, homotetramer. Interacts with PTEN upstream reading frame protein MP31; the interaction leads to inhibition of mitochondrial lactate dehydrogenase activity, preventing conversion of lactate to pyruvate in mitochondria.

It is found in the cytoplasm. The protein localises to the mitochondrion inner membrane. It carries out the reaction (S)-lactate + NAD(+) = pyruvate + NADH + H(+). Its pathway is fermentation; pyruvate fermentation to lactate; (S)-lactate from pyruvate: step 1/1. Its function is as follows. Interconverts simultaneously and stereospecifically pyruvate and lactate with concomitant interconversion of NADH and NAD(+). The polypeptide is L-lactate dehydrogenase B chain (LDHB) (Sus scrofa (Pig)).